Here is a 409-residue protein sequence, read N- to C-terminus: Failed axon connections homolog (409 aa).

The helical transmembrane segment at 68–88 (YLTGGALLAAAAYLLHELLVI) threads the bilayer. The interval 372-393 (DEGAENSFSRTPDTDFTGHSLF) is disordered.

The protein belongs to the FAX family.

It is found in the membrane. In terms of biological role, may play a role in axonal development. This chain is Failed axon connections homolog (Faxc), found in Mus musculus (Mouse).